The sequence spans 512 residues: Glutathione-binding protein GsiB (512 aa).

An N-terminal signal peptide occupies residues 1 to 26; sequence MARAVHRSGLVALGIATALMASCAFA.

Belongs to the bacterial solute-binding protein 5 family. The complex is composed of two ATP-binding proteins (GsiA), two transmembrane proteins (GsiC and GsiD) and a solute-binding protein (GsiB).

The protein resides in the periplasm. Functionally, part of the ABC transporter complex GsiABCD involved in glutathione import. Binds glutathione. The protein is Glutathione-binding protein GsiB of Escherichia coli O6:K15:H31 (strain 536 / UPEC).